Reading from the N-terminus, the 677-residue chain is Fermitin family homolog 1 (677 aa).

In terms of domain architecture, FERM spans 96–653 (MLRLRLPNAK…HEYIGGYIFL (558 aa)). A disordered region spans residues 157 to 181 (KEPVIEDILNLESSSTSSGSPVSPG). Positions 169–181 (SSSTSSGSPVSPG) are enriched in low complexity. Phosphoserine is present on residues S170 and S179. The region spanning 377–473 (KLFRPKKLML…WMAACILASK (97 aa)) is the PH domain.

It belongs to the kindlin family. In terms of assembly, interacts with the cytoplasmic domain of integrins ITGB1 and ITGB3.

The protein resides in the cytoplasm. It is found in the cytoskeleton. The protein localises to the cell junction. Its subcellular location is the focal adhesion. It localises to the cell projection. The protein resides in the ruffle membrane. Functionally, involved in cell adhesion. Contributes to integrin activation. When coexpressed with talin, potentiates activation of ITGA2B. Required for normal keratinocyte proliferation. Required for normal polarization of basal keratinocytes in skin, and for normal cell shape. Required for normal adhesion of keratinocytes to fibronectin and laminin, and for normal keratinocyte migration to wound sites. This Mus musculus (Mouse) protein is Fermitin family homolog 1 (Fermt1).